The chain runs to 248 residues: ATP synthase subunit a (248 aa).

The next 6 membrane-spanning stretches (helical) occupy residues 34 to 54, 91 to 111, 121 to 141, 147 to 167, 196 to 216, and 220 to 240; these read TNAT…LVFG, YFPY…LGLL, IAVT…LGFV, FLGL…LAVI, VFAA…AITA, and LEVL…CVYL.

The protein belongs to the ATPase A chain family. As to quaternary structure, F-type ATPases have 2 components, CF(1) - the catalytic core - and CF(0) - the membrane proton channel. CF(1) has five subunits: alpha(3), beta(3), gamma(1), delta(1), epsilon(1). CF(0) has three main subunits: a(1), b(2) and c(9-12). The alpha and beta chains form an alternating ring which encloses part of the gamma chain. CF(1) is attached to CF(0) by a central stalk formed by the gamma and epsilon chains, while a peripheral stalk is formed by the delta and b chains.

It localises to the cell inner membrane. Functionally, key component of the proton channel; it plays a direct role in the translocation of protons across the membrane. This chain is ATP synthase subunit a, found in Paracoccus denitrificans (strain Pd 1222).